A 606-amino-acid chain; its full sequence is DNA-directed RNA polymerase III subunit RPC3 (606 aa).

A leucine-zipper region spans residues 533–554; that stretch reads LTFCMADILSNIQQFKNDNKIL.

The protein belongs to the RNA polymerase beta chain family. Component of the RNA polymerase III (Pol III) complex consisting of 17 subunits.

It is found in the nucleus. Functionally, DNA-dependent RNA polymerase catalyzes the transcription of DNA into RNA using the four ribonucleoside triphosphates as substrates. Specific core component of RNA polymerase III which synthesizes small RNAs, such as 5S rRNA and tRNAs. This Debaryomyces hansenii (strain ATCC 36239 / CBS 767 / BCRC 21394 / JCM 1990 / NBRC 0083 / IGC 2968) (Yeast) protein is DNA-directed RNA polymerase III subunit RPC3 (RPC82).